The sequence spans 339 residues: Phosphate acyltransferase (339 aa).

Belongs to the PlsX family. Homodimer. Probably interacts with PlsY.

It is found in the cytoplasm. The catalysed reaction is a fatty acyl-[ACP] + phosphate = an acyl phosphate + holo-[ACP]. The protein operates within lipid metabolism; phospholipid metabolism. In terms of biological role, catalyzes the reversible formation of acyl-phosphate (acyl-PO(4)) from acyl-[acyl-carrier-protein] (acyl-ACP). This enzyme utilizes acyl-ACP as fatty acyl donor, but not acyl-CoA. The protein is Phosphate acyltransferase of Clostridium perfringens (strain SM101 / Type A).